The primary structure comprises 38 residues: Tyrosinase inhibitor (38 aa).

Cystine bridges form between Cys11-Cys25, Cys18-Cys29, and Cys24-Cys36. Position 32 is a 3',4'-dihydroxyphenylalanine (Tyr32).

Monomer. Post-translationally, contains L-DOPA (3',4'-dihydroxyphenylalanine).

The protein resides in the secreted. Potent reversible, competitive inhibitor of tyrosinase (phenol oxidase) in the nanomolar range. The polypeptide is Tyrosinase inhibitor (Musca domestica (House fly)).